A 275-amino-acid polypeptide reads, in one-letter code: Ribosomal RNA small subunit methyltransferase A (275 aa).

S-adenosyl-L-methionine is bound by residues Asn21, Leu23, Gly48, Glu69, Asp94, and Asn115.

The protein belongs to the class I-like SAM-binding methyltransferase superfamily. rRNA adenine N(6)-methyltransferase family. RsmA subfamily.

The protein resides in the cytoplasm. It catalyses the reaction adenosine(1518)/adenosine(1519) in 16S rRNA + 4 S-adenosyl-L-methionine = N(6)-dimethyladenosine(1518)/N(6)-dimethyladenosine(1519) in 16S rRNA + 4 S-adenosyl-L-homocysteine + 4 H(+). Its function is as follows. Specifically dimethylates two adjacent adenosines (A1518 and A1519) in the loop of a conserved hairpin near the 3'-end of 16S rRNA in the 30S particle. May play a critical role in biogenesis of 30S subunits. This Clostridium botulinum (strain Okra / Type B1) protein is Ribosomal RNA small subunit methyltransferase A.